The chain runs to 201 residues: Single-stranded DNA-binding protein DdrA (201 aa).

This sequence belongs to the RAD52 family. As to quaternary structure, the truncated form (1-160) of DdrA forms heptameric rings that can assemble into a 3-ring structure.

SsDNA-binding protein that contributes to the ionizing radiation resistance of D.deserti. Plays a role in DNA repair and genome reconstitution, in a RecA-independent process, since DdrA is essential for recovery from severe genomic fragmentation as a result of exposure to severe levels of ionizing radiation in an environment lacking nutrients. In vitro, binds to the 3'-ends of single-stranded DNA, and probably protects them from nuclease degradation. Thus, DdrA is part of a DNA end-protection system that helps to preserve genome integrity following irradiation or desiccation. The sequence is that of Single-stranded DNA-binding protein DdrA (ddrA) from Deinococcus deserti (strain DSM 17065 / CIP 109153 / LMG 22923 / VCD115).